A 128-amino-acid polypeptide reads, in one-letter code: Transcription antitermination protein NusB (128 aa).

This sequence belongs to the NusB family.

In terms of biological role, involved in transcription antitermination. Required for transcription of ribosomal RNA (rRNA) genes. Binds specifically to the boxA antiterminator sequence of the ribosomal RNA (rrn) operons. In Listeria monocytogenes serotype 4a (strain HCC23), this protein is Transcription antitermination protein NusB.